The sequence spans 168 residues: Alpha-amylase/trypsin inhibitor CM3 (168 aa).

The N-terminal stretch at 1 to 25 (MACKSSCSLLLLAAVLLSVLAAASA) is a signal peptide.

This sequence belongs to the protease inhibitor I6 (cereal trypsin/alpha-amylase inhibitor) family. As to quaternary structure, subunit of the tetrameric inhibitor. Five disulfide bonds, which are essential for the inhibitor activity, are probably present. As to expression, developing endosperm.

It localises to the secreted. Alpha-amylase/trypsin inhibitor. It could be involved in insect defense mechanisms. The sequence is that of Alpha-amylase/trypsin inhibitor CM3 from Triticum aestivum (Wheat).